A 146-amino-acid chain; its full sequence is Hemoglobin subunit beta (146 aa).

Val1 bears the N-acetylvaline mark. Positions 2 to 146 constitute a Globin domain; sequence HLTGEEKSAV…VANALAHKYH (145 aa). A Phosphothreonine modification is found at Thr12. Phosphoserine is present on Ser44. Position 59 is an N6-acetyllysine (Lys59). Residue His63 participates in heme b binding. At Lys82 the chain carries N6-acetyllysine. Residue His92 coordinates heme b. Cys93 bears the S-nitrosocysteine mark. Lys144 carries the N6-acetyllysine modification.

It belongs to the globin family. As to quaternary structure, heterotetramer of two alpha chains and two beta chains. In terms of tissue distribution, red blood cells.

In terms of biological role, involved in oxygen transport from the lung to the various peripheral tissues. The chain is Hemoglobin subunit beta (HBB) from Saguinus oedipus (Cotton-top tamarin).